The sequence spans 403 residues: Queuine tRNA-ribosyltransferase catalytic subunit 1 (403 aa).

An N-acetylalanine modification is found at Ala-2. The Proton acceptor role is filled by Asp-105. 105 to 109 (DSGGF) contacts queuine. Phosphoserine is present on Ser-139. Queuine-binding residues include Asp-159, Gln-202, and Gly-229. The RNA binding stretch occupies residues 260 to 266 (GVGYATD). Asp-279 (nucleophile) is an active-site residue. An RNA binding; important for wobble base 34 recognition region spans residues 284 to 288 (TRTAR). Cys-317, Cys-319, Cys-322, and His-348 together coordinate Zn(2+).

The protein belongs to the queuine tRNA-ribosyltransferase family. In terms of assembly, heterodimer of a catalytic subunit QTRT1 and an accessory subunit QTRT2. The cofactor is Zn(2+).

The protein resides in the cytoplasm. The protein localises to the mitochondrion outer membrane. The catalysed reaction is guanosine(34) in tRNA + queuine = queuosine(34) in tRNA + guanine. In terms of biological role, catalytic subunit of the queuine tRNA-ribosyltransferase (TGT) that catalyzes the base-exchange of a guanine (G) residue with queuine (Q) at position 34 (anticodon wobble position) in tRNAs with GU(N) anticodons (tRNA-Asp, -Asn, -His and -Tyr), resulting in the hypermodified nucleoside queuosine (7-(((4,5-cis-dihydroxy-2-cyclopenten-1-yl)amino)methyl)-7-deazaguanosine). Catalysis occurs through a double-displacement mechanism. The nucleophile active site attacks the C1' of nucleotide 34 to detach the guanine base from the RNA, forming a covalent enzyme-RNA intermediate. The proton acceptor active site deprotonates the incoming queuine, allowing a nucleophilic attack on the C1' of the ribose to form the product. This Rattus norvegicus (Rat) protein is Queuine tRNA-ribosyltransferase catalytic subunit 1.